The primary structure comprises 350 residues: S-adenosylmethionine:tRNA ribosyltransferase-isomerase (350 aa).

The protein belongs to the QueA family. Monomer.

Its subcellular location is the cytoplasm. It carries out the reaction 7-aminomethyl-7-carbaguanosine(34) in tRNA + S-adenosyl-L-methionine = epoxyqueuosine(34) in tRNA + adenine + L-methionine + 2 H(+). Its pathway is tRNA modification; tRNA-queuosine biosynthesis. Its function is as follows. Transfers and isomerizes the ribose moiety from AdoMet to the 7-aminomethyl group of 7-deazaguanine (preQ1-tRNA) to give epoxyqueuosine (oQ-tRNA). The protein is S-adenosylmethionine:tRNA ribosyltransferase-isomerase of Vibrio vulnificus (strain CMCP6).